Here is a 901-residue protein sequence, read N- to C-terminus: Cyanophycin synthetase (901 aa).

The region spanning 224 to 478 (KRILAASGVP…VAGAVMDMLF (255 aa)) is the ATP-grasp domain. 493-499 (GTNGKTT) serves as a coordination point for ATP.

It in the C-terminal section; belongs to the MurCDEF family. As to quaternary structure, homodimer.

It catalyses the reaction [L-4-(L-arginin-2-N-yl)aspartate](n) + L-aspartate + ATP = [L-4-(L-arginin-2-N-yl)aspartate](n)-L-aspartate + ADP + phosphate + H(+). The enzyme catalyses [L-4-(L-arginin-2-N-yl)aspartate](n)-L-aspartate + L-arginine + ATP = [L-4-(L-arginin-2-N-yl)aspartate](n+1) + ADP + phosphate + H(+). In terms of biological role, catalyzes the ATP-dependent polymerization of arginine and aspartate to multi-L-arginyl-poly-L-aspartic acid (cyanophycin; a water-insoluble reserve polymer). This chain is Cyanophycin synthetase (cphA), found in Trichormus variabilis (strain ATCC 29413 / PCC 7937) (Anabaena variabilis).